The sequence spans 274 residues: tRNA pseudouridine synthase A (274 aa).

Asp-60 serves as the catalytic Nucleophile. Substrate is bound at residue Tyr-118.

This sequence belongs to the tRNA pseudouridine synthase TruA family. As to quaternary structure, homodimer.

It carries out the reaction uridine(38/39/40) in tRNA = pseudouridine(38/39/40) in tRNA. Formation of pseudouridine at positions 38, 39 and 40 in the anticodon stem and loop of transfer RNAs. The polypeptide is tRNA pseudouridine synthase A (Picosynechococcus sp. (strain ATCC 27264 / PCC 7002 / PR-6) (Agmenellum quadruplicatum)).